The primary structure comprises 1335 residues: Aldehyde oxidase 3 (1335 aa).

One can recognise a 2Fe-2S ferredoxin-type domain in the interval 8–95; the sequence is DELIFFVNGK…GAAVTTVEGI (88 aa). C47, C52, C55, and C77 together coordinate [2Fe-2S] cluster. Q116 lines the Mo-molybdopterin pocket. [2Fe-2S] cluster-binding residues include C117, C120, C152, and C154. In terms of domain architecture, FAD-binding PCMH-type spans 236–421; the sequence is FRGERTTWIA…ISVFVPRSSK (186 aa). Residue 264–271 participates in FAD binding; it reads LVIGNTYL. Phosphoserine is present on S320. FAD contacts are provided by S354, H358, D367, and L411. Residues A802, L1043, and Q1199 each contribute to the Mo-molybdopterin site. Residue E1266 is the Proton acceptor; for azaheterocycle hydroxylase activity of the active site.

This sequence belongs to the xanthine dehydrogenase family. In terms of assembly, homodimer. [2Fe-2S] cluster serves as cofactor. Requires FAD as cofactor. Mo-molybdopterin is required as a cofactor. As to expression, highly expressed in liver (at protein level). In liver, the expression is greater in males than females.

The protein localises to the cytoplasm. It carries out the reaction an aldehyde + O2 + H2O = a carboxylate + H2O2 + H(+). Its activity is regulated as follows. Inhibited by potassium cyanide, menadione, benzamidine, raloxifene and norharmane. In terms of biological role, oxidase with broad substrate specificity, oxidizing aromatic azaheterocycles, such as N1-methylnicotinamide and phthalazine, as well as aldehydes, such as benzaldehyde, retinal and pyridoxal. Plays a key role in the metabolism of xenobiotics and drugs containing aromatic azaheterocyclic substituents. Is probably involved in the regulation of reactive oxygen species homeostasis. May be a prominent source of superoxide generation via the one-electron reduction of molecular oxygen. May also catalyze nitric oxide (NO) production via the reduction of nitrite to NO with NADH or aldehyde as electron donor. The polypeptide is Aldehyde oxidase 3 (Aox3) (Mus musculus (Mouse)).